The following is a 322-amino-acid chain: MTSHLKKVELHCHLEGAAPPALTLAQARKYNVDTNAFMRDGVYLWKDFAEFLVCYDKVSEVYRTEEDYALLTETYLEELAGIGTIYSELIVSPDHGDRIGLGADAYMEGVSAGIRAAKEKSGIEARLIVTGERHFGPERVVKAAEYAAKSDNPLISGFNMAGEERMGRVADYARAFDIAREAGLGITIHAGEVCGAFSVADAVELVRPARIGHGVRAIEDADLVKRLADLGTVLEVCPGSNIALNVFPDFPSHPLRKLRDAGVRVTISSDDPPFFHTSLKREYELASTAFGFSDDEINAMTRTAIEAAFLDEATRAALLARL.

Positions 11, 13, and 189 each coordinate Zn(2+). Glu-192 functions as the Proton donor in the catalytic mechanism. Position 270 (Asp-270) interacts with Zn(2+). Residue Asp-271 coordinates substrate.

Belongs to the metallo-dependent hydrolases superfamily. Adenosine and AMP deaminases family. Adenine deaminase type 2 subfamily. The cofactor is Zn(2+).

It carries out the reaction adenine + H2O + H(+) = hypoxanthine + NH4(+). Catalyzes the hydrolytic deamination of adenine to hypoxanthine. Plays an important role in the purine salvage pathway and in nitrogen catabolism. The polypeptide is Adenine deaminase (Rhizobium rhizogenes (strain K84 / ATCC BAA-868) (Agrobacterium radiobacter)).